The sequence spans 1072 residues: DNA-directed RNA polymerase subunit beta (1072 aa).

This sequence belongs to the RNA polymerase beta chain family. As to quaternary structure, in plastids the minimal PEP RNA polymerase catalytic core is composed of four subunits: alpha, beta, beta', and beta''. When a (nuclear-encoded) sigma factor is associated with the core the holoenzyme is formed, which can initiate transcription.

The protein localises to the plastid. It localises to the chloroplast. The catalysed reaction is RNA(n) + a ribonucleoside 5'-triphosphate = RNA(n+1) + diphosphate. DNA-dependent RNA polymerase catalyzes the transcription of DNA into RNA using the four ribonucleoside triphosphates as substrates. This chain is DNA-directed RNA polymerase subunit beta, found in Eucalyptus globulus subsp. globulus (Tasmanian blue gum).